The primary structure comprises 428 residues: Adenylosuccinate synthetase (428 aa).

GTP is bound by residues 12–18 and 40–42; these read GDEGKGK and GHT. Catalysis depends on Asp-13, which acts as the Proton acceptor. Positions 13 and 40 each coordinate Mg(2+). Residues 13-16, 38-41, Thr-128, Arg-142, Gln-223, Thr-238, and Arg-302 contribute to the IMP site; these read DEGK and NAGH. Catalysis depends on His-41, which acts as the Proton donor. 298-304 provides a ligand contact to substrate; sequence VTTGRPR. Residues Arg-304, 330-332, and 412-414 each bind GTP; these read KLD and GTG.

It belongs to the adenylosuccinate synthetase family. Homodimer. Requires Mg(2+) as cofactor.

It is found in the cytoplasm. The catalysed reaction is IMP + L-aspartate + GTP = N(6)-(1,2-dicarboxyethyl)-AMP + GDP + phosphate + 2 H(+). It functions in the pathway purine metabolism; AMP biosynthesis via de novo pathway; AMP from IMP: step 1/2. In terms of biological role, plays an important role in the de novo pathway of purine nucleotide biosynthesis. Catalyzes the first committed step in the biosynthesis of AMP from IMP. In Bifidobacterium adolescentis (strain ATCC 15703 / DSM 20083 / NCTC 11814 / E194a), this protein is Adenylosuccinate synthetase.